The sequence spans 337 residues: Terpene synthase 4 (337 aa).

Residues aspartate 94 and aspartate 98 each coordinate Mg(2+). Residues 94–98 (DDIFD) carry the D(D/E)XX(D/E) motif motif. Arginine 195 contributes to the substrate binding site. Positions 241, 245, and 249 each coordinate Mg(2+). An NSE motif motif is present at residues 241–249 (NDIYSYHRE). The WxxxxxRY motif motif lies at 320-327 (WSESCTRY).

The protein belongs to the terpene synthase family. It depends on Mg(2+) as a cofactor.

It carries out the reaction (2E,6E)-farnesyl diphosphate = alpha-muurolene + diphosphate. The catalysed reaction is (2E,6E)-farnesyl diphosphate = (-)-(E)-beta-caryophyllene + diphosphate. Its function is as follows. Terpene synthase that catalyzes the cyclization of farnesyl diphosphate (FPP) into alpha-muurolene, (-)-beta-caryophyllene, and one unidentified sesquiterpene. TPS4 shows only trace monoterpene synthase activity with geranyl diphosphate (GPP) as substrate and produces very small amounts of myrcene. P.polycephalum has a unique biology and these volatile terpenoids could function in internal communication of P.polycephalum, to mark the territory that have been explored, or they may be involved in chemotaxis. The polypeptide is Terpene synthase 4 (Physarum polycephalum (Slime mold)).